We begin with the raw amino-acid sequence, 190 residues long: Adenine phosphoribosyltransferase (190 aa).

Belongs to the purine/pyrimidine phosphoribosyltransferase family. Homodimer.

It is found in the cytoplasm. It carries out the reaction AMP + diphosphate = 5-phospho-alpha-D-ribose 1-diphosphate + adenine. It participates in purine metabolism; AMP biosynthesis via salvage pathway; AMP from adenine: step 1/1. Its function is as follows. Catalyzes a salvage reaction resulting in the formation of AMP, that is energically less costly than de novo synthesis. The protein is Adenine phosphoribosyltransferase of Cupriavidus necator (strain ATCC 17699 / DSM 428 / KCTC 22496 / NCIMB 10442 / H16 / Stanier 337) (Ralstonia eutropha).